The following is a 164-amino-acid chain: SsrA-binding protein (164 aa).

The protein belongs to the SmpB family.

The protein resides in the cytoplasm. Required for rescue of stalled ribosomes mediated by trans-translation. Binds to transfer-messenger RNA (tmRNA), required for stable association of tmRNA with ribosomes. tmRNA and SmpB together mimic tRNA shape, replacing the anticodon stem-loop with SmpB. tmRNA is encoded by the ssrA gene; the 2 termini fold to resemble tRNA(Ala) and it encodes a 'tag peptide', a short internal open reading frame. During trans-translation Ala-aminoacylated tmRNA acts like a tRNA, entering the A-site of stalled ribosomes, displacing the stalled mRNA. The ribosome then switches to translate the ORF on the tmRNA; the nascent peptide is terminated with the 'tag peptide' encoded by the tmRNA and targeted for degradation. The ribosome is freed to recommence translation, which seems to be the essential function of trans-translation. The protein is SsrA-binding protein of Corynebacterium glutamicum (strain R).